The chain runs to 200 residues: dITP/XTP pyrophosphatase (200 aa).

A substrate-binding site is contributed by 8–13 (TGNQGK). Residue D69 is the Proton acceptor of the active site. A Mg(2+)-binding site is contributed by D69. Substrate is bound by residues S70, 154–157 (FGYD), K177, and 182–183 (HR).

This sequence belongs to the HAM1 NTPase family. Homodimer. The cofactor is Mg(2+).

The catalysed reaction is XTP + H2O = XMP + diphosphate + H(+). The enzyme catalyses dITP + H2O = dIMP + diphosphate + H(+). It catalyses the reaction ITP + H2O = IMP + diphosphate + H(+). In terms of biological role, pyrophosphatase that catalyzes the hydrolysis of nucleoside triphosphates to their monophosphate derivatives, with a high preference for the non-canonical purine nucleotides XTP (xanthosine triphosphate), dITP (deoxyinosine triphosphate) and ITP. Seems to function as a house-cleaning enzyme that removes non-canonical purine nucleotides from the nucleotide pool, thus preventing their incorporation into DNA/RNA and avoiding chromosomal lesions. The sequence is that of dITP/XTP pyrophosphatase from Vibrio vulnificus (strain CMCP6).